Here is a 77-residue protein sequence, read N- to C-terminus: Neurexophilin-4 (77 aa).

A v (Cys-rich) region spans residues 1 to 77 (NCHVEYEKTN…NFQSEHPYFG (77 aa)).

This sequence belongs to the neurexophilin family. In terms of processing, may be proteolytically processed at the boundary between the N-terminal non-conserved and the central conserved domain in neuron-like cells.

The protein resides in the secreted. Functionally, may be signaling molecules that resemble neuropeptides and that act by binding to alpha-neurexins and possibly other receptors. This chain is Neurexophilin-4 (NXPH4), found in Macaca mulatta (Rhesus macaque).